Consider the following 170-residue polypeptide: Translationally-controlled tumor protein homolog (170 aa).

A TCTP domain is found at 1-170 (MIIYKDLLSG…FKDGLEIEKC (170 aa)).

This sequence belongs to the TCTP family.

The protein localises to the cytoplasm. Involved in calcium binding and microtubule stabilization. In Scophthalmus maximus (Turbot), this protein is Translationally-controlled tumor protein homolog (tpt1).